The primary structure comprises 155 residues: uncharacterized protein (155 aa).

The first 21 residues, 1-21 (MFFIVAAGFVIAALIAAIGMA), serve as a signal peptide directing secretion. The disordered stretch occupies residues 35 to 155 (GQTKPATTRP…PVYRPPEEMV (121 aa)). A compositionally biased stretch (polar residues) spans 118-128 (ATASNTPQNEA).

This is an uncharacterized protein from Schizosaccharomyces pombe (strain 972 / ATCC 24843) (Fission yeast).